Reading from the N-terminus, the 383-residue chain is NIPA-like protein 2 (383 aa).

Residues Asn23 and Asn33 are each glycosylated (N-linked (GlcNAc...) asparagine). Transmembrane regions (helical) follow at residues Ile46–Asn66, Val88–Tyr108, Leu115–Leu135, Leu144–Ile164, Phe177–Leu197, Ile208–Ala228, Leu243–Val263, Val278–Tyr298, and Phe306–Val326. The segment at Asp352–Ser383 is disordered.

This sequence belongs to the NIPA family.

It is found in the membrane. The chain is NIPA-like protein 2 (Nipal2) from Mus musculus (Mouse).